Here is a 165-residue protein sequence, read N- to C-terminus: Nucleotide-binding protein P9211_04811 (165 aa).

Belongs to the YajQ family.

Functionally, nucleotide-binding protein. This Prochlorococcus marinus (strain MIT 9211) protein is Nucleotide-binding protein P9211_04811.